We begin with the raw amino-acid sequence, 453 residues long: uncharacterized protein (453 aa).

Residues 5–63 (LLKKNQSIELTIEDLTHDGSGVGKIDGYPLFIPNTLPGEKVTAKIIKLNKNYGFARMEN) form the TRAM domain. [4Fe-4S] cluster-binding residues include C76, C82, C85, and C162. S-adenosyl-L-methionine-binding residues include Q285, Y314, E335, and D383. Catalysis depends on C410, which acts as the Nucleophile.

This sequence belongs to the class I-like SAM-binding methyltransferase superfamily. RNA M5U methyltransferase family.

This is an uncharacterized protein from Listeria monocytogenes serotype 4b (strain F2365).